The following is a 630-amino-acid chain: 1,4-alpha-glucan branching enzyme GlgB (630 aa).

The active-site Nucleophile is D311. Residue E362 is the Proton donor of the active site.

This sequence belongs to the glycosyl hydrolase 13 family. GlgB subfamily. Monomer.

The enzyme catalyses Transfers a segment of a (1-&gt;4)-alpha-D-glucan chain to a primary hydroxy group in a similar glucan chain.. Its pathway is glycan biosynthesis; glycogen biosynthesis. In terms of biological role, catalyzes the formation of the alpha-1,6-glucosidic linkages in glycogen by scission of a 1,4-alpha-linked oligosaccharide from growing alpha-1,4-glucan chains and the subsequent attachment of the oligosaccharide to the alpha-1,6 position. The polypeptide is 1,4-alpha-glucan branching enzyme GlgB (Aquifex aeolicus (strain VF5)).